The primary structure comprises 182 residues: ATP-dependent protease subunit HslV (182 aa).

The active site involves T2. 3 residues coordinate Na(+): G157, C160, and T163.

Belongs to the peptidase T1B family. HslV subfamily. As to quaternary structure, a double ring-shaped homohexamer of HslV is capped on each side by a ring-shaped HslU homohexamer. The assembly of the HslU/HslV complex is dependent on binding of ATP.

It localises to the cytoplasm. The catalysed reaction is ATP-dependent cleavage of peptide bonds with broad specificity.. Allosterically activated by HslU binding. Protease subunit of a proteasome-like degradation complex believed to be a general protein degrading machinery. In Vibrio atlanticus (strain LGP32) (Vibrio splendidus (strain Mel32)), this protein is ATP-dependent protease subunit HslV.